Consider the following 227-residue polypeptide: N-acetyltransferase 8 (227 aa).

At 1–35 (MASFRIRQFQERDYKQVVDVFSRGMEEHIPTAFRH) the chain is on the cytoplasmic side. A helical; Signal-anchor for type II membrane protein membrane pass occupies residues 36–56 (LLTLPRTLLLLAVVPLAIVLV). The Lumenal portion of the chain corresponds to 57–227 (SGSWFLAVVC…PLPSAQKYEL (171 aa)). The N-acetyltransferase domain maps to 69–217 (FLFLFLWFLA…VDVSLIHFIY (149 aa)).

This sequence belongs to the NAT8 family. In terms of tissue distribution, expressed in brain (at protein level).

The protein localises to the endoplasmic reticulum-Golgi intermediate compartment membrane. It localises to the endoplasmic reticulum membrane. It catalyses the reaction L-lysyl-[protein] + acetyl-CoA = N(6)-acetyl-L-lysyl-[protein] + CoA + H(+). It carries out the reaction an S-substituted L-cysteine + acetyl-CoA = an N-acetyl-L-cysteine-S-conjugate + CoA + H(+). The protein operates within sulfur metabolism; glutathione metabolism. Its function is as follows. Endoplasmic reticulum (ER)-membrane-bound lysine N-acetyltransferase catalyzing the N6-acetylation of lysine residues in the lumen of the ER in various proteins, including PROM1 and BACE1, using acetyl-CoA as acetyl donor. Thereby, may regulate apoptosis through the acetylation and the regulation of the expression of PROM1. May also regulate amyloid beta-peptide secretion through acetylation of BACE1 and the regulation of its expression in neurons. N(6)-lysine acetylation in the ER maintains protein homeostasis and regulates reticulophagy. Alternatively, acetylates the free alpha-amino group of cysteine S-conjugates to form mercapturic acids. This is the final step in a major route for detoxification of a wide variety of reactive electrophiles which starts with their incorporation into glutathione S-conjugates. The glutathione S-conjugates are then further processed into cysteine S-conjugates and finally mercapturic acids which are water soluble and can be readily excreted in urine or bile. The protein is N-acetyltransferase 8 (Nat8) of Mus musculus (Mouse).